Consider the following 244-residue polypeptide: MKINISYPATGCQKLIEVDDERKLRPFYEKRMSHQMTAESLGDEWKGYLVRISGGNDKQGFPMKQGVLTNGRVRLLLGKGHSCYRPRRTGERKRKSVRGCIVDSNLSVLNLVILKKGEQDIPGLTDTTIPRRLGPKRAGRIRKLFNLNKEDDVRQYVVRRPLPQKEGKKQKFKTPKIQRLITPQRLQRKRHMRAVKRRRYAKQREEEATYAKLLAKRKKEEREAHAKRRSSARESSLRESKSKA.

Positions 185-244 (RLQRKRHMRAVKRRRYAKQREEEATYAKLLAKRKKEEREAHAKRRSSARESSLRESKSKA) are disordered. Basic residues predominate over residues 186-201 (LQRKRHMRAVKRRRYA). Positions 231–244 (SARESSLRESKSKA) are enriched in basic and acidic residues.

The protein belongs to the eukaryotic ribosomal protein eS6 family. In terms of processing, ribosomal protein S6 is the major substrate of protein kinases in eukaryote ribosomes.

In terms of biological role, component of the 40S small ribosomal subunit. Plays an important role in controlling cell growth and proliferation through the selective translation of particular classes of mRNA. This chain is Small ribosomal subunit protein eS6 (RPS6), found in Branchiostoma floridae (Florida lancelet).